Consider the following 286-residue polypeptide: Tryptophan 2,3-dioxygenase (286 aa).

Residues 53-57 (FIVQH), Tyr115, and Arg119 each bind substrate. Residue His242 coordinates heme. Thr256 contacts substrate.

It belongs to the tryptophan 2,3-dioxygenase family. As to quaternary structure, homotetramer. Heme is required as a cofactor.

The catalysed reaction is L-tryptophan + O2 = N-formyl-L-kynurenine. The protein operates within amino-acid degradation; L-tryptophan degradation via kynurenine pathway; L-kynurenine from L-tryptophan: step 1/2. Heme-dependent dioxygenase that catalyzes the oxidative cleavage of the L-tryptophan (L-Trp) pyrrole ring and converts L-tryptophan to N-formyl-L-kynurenine. Catalyzes the oxidative cleavage of the indole moiety. This is Tryptophan 2,3-dioxygenase from Kineococcus radiotolerans (strain ATCC BAA-149 / DSM 14245 / SRS30216).